The primary structure comprises 400 residues: D(3) dopamine receptor (400 aa).

Residues 1-32 lie on the Extracellular side of the membrane; sequence MAPLSQLSGHLNYTCGVENSTGASQARPHAYY. N-linked (GlcNAc...) asparagine glycans are attached at residues Asn12 and Asn19. The chain crosses the membrane as a helical span at residues 33–55; that stretch reads ALSYCALILAIVFGNGLVCMAVL. Residues 56-65 are Cytoplasmic-facing; it reads KERALQTTTN. The helical transmembrane segment at 66-88 threads the bilayer; it reads YLVVSLAVADLLVATLVMPWVVY. Residues 89–104 lie on the Extracellular side of the membrane; the sequence is LEVTGGVWNFSRVCCD. Residue Asn97 is glycosylated (N-linked (GlcNAc...) asparagine). A disulfide bond links Cys103 and Cys181. The chain crosses the membrane as a helical span at residues 105-126; sequence VFVTLDVMMCTASILNLCAISI. At 127 to 149 the chain is on the cytoplasmic side; sequence DRYTAVVMPVHYQHGTGQSSCRR. Residues 150–170 traverse the membrane as a helical segment; sequence VTLMITAVWVLAFAVSCPLLF. The Extracellular portion of the chain corresponds to 171-187; that stretch reads GFNTTGDPTVCSISNPD. Asn173 carries N-linked (GlcNAc...) asparagine glycosylation. Residues 188–209 traverse the membrane as a helical segment; sequence FVIYSSVVSFYLPFGVTVLVYA. The Cytoplasmic portion of the chain corresponds to 210 to 329; that stretch reads RIYVVLKQRR…VPLREKKATQ (120 aa). Residues 330–351 traverse the membrane as a helical segment; the sequence is MVAIVLGAFIVCWLPFFLTHVL. Residues 352-366 lie on the Extracellular side of the membrane; that stretch reads NTHCQTCHVSPELYS. A disulfide bridge links Cys355 with Cys358. A helical membrane pass occupies residues 367–386; that stretch reads ATTWLGYVNSALNPVIYTTF. Residues 387-400 lie on the Cytoplasmic side of the membrane; sequence NIEFRKAFLKILSC.

This sequence belongs to the G-protein coupled receptor 1 family. In terms of assembly, interacts with CLIC6. Interacts with GRK4. Interacts with PALM. Interacts with FLNA (via filamin repeat 21); increases PKA-mediated phosphorylation of FLNA. Post-translationally, phosphorylated by GRK4. Palmitoylated.

The protein localises to the cell membrane. Dopamine receptor whose activity is mediated by G proteins which inhibit adenylyl cyclase. Promotes cell proliferation. This Chlorocebus aethiops (Green monkey) protein is D(3) dopamine receptor (DRD3).